The sequence spans 250 residues: Triosephosphate isomerase, glycosomal (250 aa).

2 residues coordinate substrate: asparagine 11 and lysine 13. The active-site Electrophile is the histidine 95. Residue glutamate 167 is the Proton acceptor of the active site.

The protein belongs to the triosephosphate isomerase family. As to quaternary structure, homodimer.

The protein localises to the glycosome. The catalysed reaction is D-glyceraldehyde 3-phosphate = dihydroxyacetone phosphate. It functions in the pathway carbohydrate biosynthesis; gluconeogenesis. Its pathway is carbohydrate degradation; glycolysis; D-glyceraldehyde 3-phosphate from glycerone phosphate: step 1/1. This Trypanosoma brucei brucei protein is Triosephosphate isomerase, glycosomal.